The following is a 757-amino-acid chain: Mitofusin-2 (757 aa).

Over 1–604 (MSLLFSRCNS…TQEELMVSMV (604 aa)) the chain is Cytoplasmic. The interval 30 to 94 (KHFVTAKKKI…VRGISEVLAR (65 aa)) is part of a helix bundle domain, formed by helices from N-terminal and C-terminal regions. In terms of domain architecture, Dynamin-type G spans 93–342 (ARRHMKVAFF…VRMFEFQNFE (250 aa)). Residues 103–110 (GRTSNGKS) form a G1 motif region. A GTP-binding site is contributed by 106–111 (SNGKST). Thr-111 carries the phosphothreonine; by PINK1 modification. A G2 motif region spans residues 129–130 (TT). Residues 199-202 (DSPG) are G3 motif. 258–261 (NRWD) contacts GTP. Positions 258 to 261 (NRWD) are G4 motif. Position 288 (Glu-288) is a region of interest, G5 motif. GTP contacts are provided by Ser-305 and Lys-307. The tract at residues 359-385 (EQHTVRAKQIAEAVRLIMDSLHIAAQE) is part of a helix bundle domain, formed by helices from N-terminal and C-terminal regions. Residues 406-435 (KQLELLAQDYKLRIKQMTEEVERQVSTAMA) adopt a coiled-coil conformation. Ser-442 bears the Phosphoserine; by PINK1 mark. The chain crosses the membrane as a helical span at residues 605–625 (TGLASLTSRTSMGILVVGGVV). A topological domain (mitochondrial intermembrane) is located at residue Trp-626. A helical membrane pass occupies residues 627–647 (KAVGWRLIALSFGLYGLLYVY). At 648-757 (ERLTWTTRAK…FIHQYLQPSR (110 aa)) the chain is on the cytoplasmic side. A coiled-coil region spans residues 696–738 (FAHLCQQVDITRDNLEQEIAAMNKKVEALDSLQSKAKLLRNKA). The interval 722–753 (EALDSLQSKAKLLRNKAGWLDSELNMFIHQYL) is part of a helix bundle domain, formed by helices from N-terminal and C-terminal regions.

The protein belongs to the TRAFAC class dynamin-like GTPase superfamily. Dynamin/Fzo/YdjA family. Mitofusin subfamily. As to quaternary structure, forms homomultimers and heteromultimers with MFN1. Oligomerization is essential for mitochondrion fusion. Interacts with VAT1. Interacts with STOML2; may form heterooligomers. Interacts (phosphorylated) with PRKN. Interacts with EIF2AK3. Interacts with THG1L; THG1L probably functions as a guanyl-nucleotide exchange factor/GEF, activating MFN2. In terms of processing, phosphorylated by PINK1. Post-translationally, ubiquitinated by non-degradative ubiquitin by PRKN, promoting mitochondrial fusion; deubiquitination by USP30 inhibits mitochondrial fusion. Ubiquitinated by HUWE1 when dietary stearate (C18:0) levels are low; ubiquitination inhibits mitochondrial fusion. Ubiquitous. In brain, it is more expressed than MFN1, while it is expressed at a weaker level than MFN1 in heart and testis. Expressed at high level in elongating spermatids of seminiferous tubules. Expression is markedly down-regulated in highly proliferative vascular smooth muscle cells (VSMCs) from the genetic hypertensive animal model SHR, as well as in balloon-injured Wistar Kyoto arteries.

It is found in the mitochondrion outer membrane. The catalysed reaction is GTP + H2O = GDP + phosphate + H(+). In terms of biological role, mitochondrial outer membrane GTPase that mediates mitochondrial clustering and fusion. Mitochondria are highly dynamic organelles, and their morphology is determined by the equilibrium between mitochondrial fusion and fission events. Overexpression induces the formation of mitochondrial networks. Membrane clustering requires GTPase activity and may involve a major rearrangement of the coiled coil domains. Plays a central role in mitochondrial metabolism and may be associated with obesity and/or apoptosis processes. Plays an important role in the regulation of vascular smooth muscle cell proliferation. Involved in the clearance of damaged mitochondria via selective autophagy (mitophagy). Is required for PRKN recruitment to dysfunctional mitochondria. Involved in the control of unfolded protein response (UPR) upon ER stress including activation of apoptosis and autophagy during ER stress. Acts as an upstream regulator of EIF2AK3 and suppresses EIF2AK3 activation under basal conditions. The chain is Mitofusin-2 (Mfn2) from Rattus norvegicus (Rat).